Reading from the N-terminus, the 1124-residue chain is Ras-associating and dilute domain-containing protein (1124 aa).

Positions 61–164 constitute a Ras-associating domain; the sequence is APGVLKIFGD…RRFELRRRAE (104 aa). The tract at residues 226–253 is disordered; it reads YYSTLPGPIRTRSARDSEIRKERDGGGV. The span at 238 to 252 shows a compositional bias: basic and acidic residues; that stretch reads SARDSEIRKERDGGG. Residues 284–342 form the FHA domain; the sequence is HTVGQETASARPNICLSSPDVLPLHCRIRRAAQRRSSSDQRLLLEPVAHGNVLVNFMRI. Positions 516-809 constitute a Dilute domain; that stretch reads ASLSLLSISD…VDLLESFENH (294 aa). Disordered stretches follow at residues 850 to 942 and 960 to 982; these read THPS…TPPN and PEHA…CMRS. Residues 866 to 876 show a composition bias toward pro residues; that stretch reads PPQPHSSPHPA. Residues 903 to 912 are compositionally biased toward basic and acidic residues; it reads AEDRTRDKPT. Over residues 926 to 937 the composition is skewed to polar residues; that stretch reads ANQSQATDSSCI. A compositionally biased stretch (basic and acidic residues) spans 960-969; the sequence is PEHASQEHTH. Residues 1027–1112 enclose the PDZ domain; it reads VVDLDKGPYG…RLRFLVAKSD (86 aa).

This sequence belongs to the RADIL family. In terms of assembly, interacts with RAP1A; in a GTP-dependent manner. In terms of tissue distribution, ubiquitously expressed and enriched in the anterior part of the embryos.

Its function is as follows. Downstream effector of Rap required for cell adhesion and migration of neural crest precursors during development. This chain is Ras-associating and dilute domain-containing protein (radil), found in Danio rerio (Zebrafish).